The primary structure comprises 76 residues: ATP synthase subunit 9, mitochondrial (76 aa).

2 helical membrane passes run 11–31 (IGAG…GIVF) and 53–73 (ILGF…AFLI).

Belongs to the ATPase C chain family. F-type ATPases have 2 components, CF(1) - the catalytic core - and CF(0) - the membrane proton channel. CF(1) has five subunits: alpha(3), beta(3), gamma(1), delta(1), epsilon(1). CF(0) has three main subunits: a, b and c.

The protein localises to the mitochondrion membrane. This protein is one of the chains of the nonenzymatic membrane component (F0) of mitochondrial ATPase. This Chondrus crispus (Carrageen Irish moss) protein is ATP synthase subunit 9, mitochondrial (ATP9).